The chain runs to 172 residues: NADH-quinone oxidoreductase subunit B 1 (172 aa).

Residues Cys42, Cys43, Cys107, and Cys137 each coordinate [4Fe-4S] cluster.

It belongs to the complex I 20 kDa subunit family. As to quaternary structure, NDH-1 is composed of 14 different subunits. Subunits NuoB, C, D, E, F, and G constitute the peripheral sector of the complex. It depends on [4Fe-4S] cluster as a cofactor.

The protein resides in the cell inner membrane. It carries out the reaction a quinone + NADH + 5 H(+)(in) = a quinol + NAD(+) + 4 H(+)(out). NDH-1 shuttles electrons from NADH, via FMN and iron-sulfur (Fe-S) centers, to quinones in the respiratory chain. Couples the redox reaction to proton translocation (for every two electrons transferred, four hydrogen ions are translocated across the cytoplasmic membrane), and thus conserves the redox energy in a proton gradient. The sequence is that of NADH-quinone oxidoreductase subunit B 1 from Anaeromyxobacter sp. (strain Fw109-5).